Reading from the N-terminus, the 116-residue chain is Protein Rev (116 aa).

Phosphoserine; by host CK2 occurs at positions 5 and 8. Residues 18–26 are homomultimerization; that stretch reads IIKHLYQSN. The tract at residues 20–48 is disordered; sequence KHLYQSNPPPKPEGTRQARRNRRRRWRER. The Nuclear localization signal and RNA-binding (RRE) motif lies at 34–50; sequence TRQARRNRRRRWRERQR. The segment covering 36-48 has biased composition (basic residues); that stretch reads QARRNRRRRWRER. The Nuclear export signal and binding to XPO1 motif lies at 73-84; that stretch reads LQLPPLERLTLD. A disordered region spans residues 91-116; the sequence is TSGTQGVGSPQILVESPAVLESGTKE. Ser92 and Ser99 each carry phosphoserine; by host.

It belongs to the HIV-1 REV protein family. As to quaternary structure, homomultimer; when bound to the RRE. Multimeric assembly is essential for activity and may involve XPO1. Binds to human KPNB1, XPO1, TNPO1, RANBP5 and IPO7. Interacts with the viral Integrase. Interacts with human KHDRBS1. Interacts with human NAP1; this interaction decreases Rev multimerization and stimulates its activity. Interacts with human DEAD-box helicases DDX3 and DDX24; these interactions may serve for viral RNA export to the cytoplasm and packaging, respectively. Interacts with human PSIP1; this interaction may inhibit HIV-1 DNA integration by promoting dissociation of the Integrase-LEDGF/p75 complex. In terms of processing, asymmetrically arginine dimethylated at one site by host PRMT6. Methylation impairs the RNA-binding activity and export of viral RNA from the nucleus to the cytoplasm. Post-translationally, phosphorylated by protein kinase CK2. Presence of, and maybe binding to the N-terminus of the regulatory beta subunit of CK2 is necessary for CK2-mediated Rev's phosphorylation.

The protein localises to the host nucleus. It is found in the host nucleolus. Its subcellular location is the host cytoplasm. Functionally, escorts unspliced or incompletely spliced viral pre-mRNAs (late transcripts) out of the nucleus of infected cells. These pre-mRNAs carry a recognition sequence called Rev responsive element (RRE) located in the env gene, that is not present in fully spliced viral mRNAs (early transcripts). This function is essential since most viral proteins are translated from unspliced or partially spliced pre-mRNAs which cannot exit the nucleus by the pathway used by fully processed cellular mRNAs. Rev itself is translated from a fully spliced mRNA that readily exits the nucleus. Rev's nuclear localization signal (NLS) binds directly to KPNB1/Importin beta-1 without previous binding to KPNA1/Importin alpha-1. KPNB1 binds to the GDP bound form of RAN (Ran-GDP) and targets Rev to the nucleus. In the nucleus, the conversion from Ran-GDP to Ran-GTP dissociates Rev from KPNB1 and allows Rev's binding to the RRE in viral pre-mRNAs. Rev multimerization on the RRE via cooperative assembly exposes its nuclear export signal (NES) to the surface. Rev can then form a complex with XPO1/CRM1 and Ran-GTP, leading to nuclear export of the complex. Conversion from Ran-GTP to Ran-GDP mediates dissociation of the Rev/RRE/XPO1/RAN complex, so that Rev can return to the nucleus for a subsequent round of export. Beside KPNB1, also seems to interact with TNPO1/Transportin-1, RANBP5/IPO5 and IPO7/RANBP7 for nuclear import. The nucleoporin-like HRB/RIP is an essential cofactor that probably indirectly interacts with Rev to release HIV RNAs from the perinuclear region to the cytoplasm. The polypeptide is Protein Rev (Human immunodeficiency virus type 1 group M subtype B (isolate CDC-451) (HIV-1)).